Here is a 363-residue protein sequence, read N- to C-terminus: Proline/serine-rich coiled-coil protein 1 (363 aa).

At Ser22 the chain carries Phosphoserine. Residues 38–41 form repeat 1; sequence PEKP. Residues 39-67 are disordered; the sequence is EKPLRRGLSHRSDPNAVAPAPQGVRLSLG. The residue at position 42 (Leu42) is a Phosphoserine. Gly45 carries the phosphothreonine modification. Residues Ser47, Ser65, Ser70, Ser98, Ser122, and Ser140 each carry the phosphoserine modification. Copy 2 of the repeat occupies 68–71; sequence PLSP. A coiled-coil region spans residues 70–94; sequence SPEKLEEILDEANRLAAQLEQCALQ. Positions 95–363 are disordered; that stretch reads DRESAGEGLG…RKVAVPGPTR (269 aa). The interval 103–246 is 4 X 4 AA repeats of P-X-X-P; that stretch reads LGPRRVKPSP…HPSPPGPPTP (144 aa). Residues 112 to 124 show a composition bias toward basic and acidic residues; it reads PRRETFVLKDSPV. The segment covering 133 to 148 has biased composition (low complexity); the sequence is SLTRSTPSPSSLTPRL. A Phosphothreonine modification is found at Thr145. Phosphoserine is present on residues Ser186 and Ser190. The span at 186–196 shows a compositional bias: polar residues; the sequence is SPASSPLTRST. Residues 197–210 are compositionally biased toward low complexity; it reads PPVRGRAGPSGRAA. A Phosphoserine modification is found at Ser212. Thr215 is subject to Phosphothreonine. 2 consecutive repeat copies span residues 238 to 241 and 243 to 246.

Belongs to the PSRC1 family. In terms of assembly, interacts with APC2. Interacts with KIF2A. Interacts with ANKRD53; recruits ANKRD53 to the spindle during mitosis. Post-translationally, phosphorylated during mitosis. In terms of tissue distribution, widely expressed in adult and fetal tissues, with highest expression in the adult brain and fetal thymus. Not detected in adult skeletal muscle.

The protein localises to the cytoplasm. The protein resides in the cytoskeleton. Its subcellular location is the spindle. It is found in the spindle pole. Functionally, required for normal progression through mitosis. Required for normal congress of chromosomes at the metaphase plate, and for normal rate of chromosomal segregation during anaphase. Plays a role in the regulation of mitotic spindle dynamics. Increases the rate of turnover of microtubules on metaphase spindles, and contributes to the generation of normal tension across sister kinetochores. Recruits KIF2A and ANKRD53 to the mitotic spindle and spindle poles. May participate in p53/TP53-regulated growth suppression. The chain is Proline/serine-rich coiled-coil protein 1 (PSRC1) from Homo sapiens (Human).